The following is a 196-amino-acid chain: Superantigen-like protein 11 (196 aa).

The tract at residues 65 to 167 (LDVFVVREGS…RVTMKNGDFY (103 aa)) is sialyl Lewis X-binding.

The protein belongs to the staphylococcal/streptococcal toxin family. Homodimer (via its C-terminal domain). Interacts with host FCAR and SELPLG (via sialyl Lewis X).

Its subcellular location is the secreted. Secreted protein that plays a role in the inhibition of host immune system. Targets myeloid cells such as monocytes or granulocytes through binding with sialyllactosamine-containing glycoproteins. Prevents initial rolling of neutrophils toward the site of infection by interacting with host SELPLG. Disrupts neutrophil motility by induction of cell adhesion via interacting with glycans but independently of SELPLG. This chain is Superantigen-like protein 11, found in Staphylococcus aureus.